The following is a 793-amino-acid chain: ClpA homolog protein (793 aa).

A disordered region spans residues 1 to 24; the sequence is MRPRSNAGSSPPDPEEQEHAQVPS. Residues 22-168 enclose the Clp R domain; the sequence is VPSFSSTLEQ…NFIAHGVAKD (147 aa). 2 repeat regions span residues 25–88 and 103–168; these read FSST…IDDD and PTAA…VAKD. The tract at residues 169–194 is disordered; the sequence is PSYGESRPVQGADEPQETPKAEAGEA. The span at 185–194 shows a compositional bias: basic and acidic residues; sequence ETPKAEAGEA. The i stretch occupies residues 199-447; that stretch reads LSKYCVDLNI…AQHLVSDSKR (249 aa). Residues 244–251 and 525–532 contribute to the ATP site; these read GDPGVGKT and GPTGVGKT. The II stretch occupies residues 451-639; sequence LGTKEIEAVV…ILIMTSNVGA (189 aa).

Belongs to the ClpA/ClpB family.

This Fuscovulum blasticum (Rhodobacter blasticus) protein is ClpA homolog protein.